Here is a 259-residue protein sequence, read N- to C-terminus: Hydroxyethylthiazole kinase (259 aa).

Residue M38 coordinates substrate. Residues R113 and S158 each coordinate ATP. Position 185 (G185) interacts with substrate.

It belongs to the Thz kinase family. It depends on Mg(2+) as a cofactor.

It catalyses the reaction 5-(2-hydroxyethyl)-4-methylthiazole + ATP = 4-methyl-5-(2-phosphooxyethyl)-thiazole + ADP + H(+). The protein operates within cofactor biosynthesis; thiamine diphosphate biosynthesis; 4-methyl-5-(2-phosphoethyl)-thiazole from 5-(2-hydroxyethyl)-4-methylthiazole: step 1/1. In terms of biological role, catalyzes the phosphorylation of the hydroxyl group of 4-methyl-5-beta-hydroxyethylthiazole (THZ). The chain is Hydroxyethylthiazole kinase from Leuconostoc citreum (strain KM20).